The following is a 469-amino-acid chain: 3-isopropylmalate dehydratase large subunit (469 aa).

Residues Cys-347, Cys-410, and Cys-413 each contribute to the [4Fe-4S] cluster site.

This sequence belongs to the aconitase/IPM isomerase family. LeuC type 1 subfamily. As to quaternary structure, heterodimer of LeuC and LeuD. [4Fe-4S] cluster serves as cofactor.

The catalysed reaction is (2R,3S)-3-isopropylmalate = (2S)-2-isopropylmalate. It functions in the pathway amino-acid biosynthesis; L-leucine biosynthesis; L-leucine from 3-methyl-2-oxobutanoate: step 2/4. In terms of biological role, catalyzes the isomerization between 2-isopropylmalate and 3-isopropylmalate, via the formation of 2-isopropylmaleate. The polypeptide is 3-isopropylmalate dehydratase large subunit (Ralstonia nicotianae (strain ATCC BAA-1114 / GMI1000) (Ralstonia solanacearum)).